Consider the following 23-residue polypeptide: Testis ecdysiotropin peptide B (23 aa).

In terms of biological role, stimulates synthesis of ecdysteroid in the testes of larvae and pupae. This is Testis ecdysiotropin peptide B from Lymantria dispar (Gypsy moth).